Consider the following 520-residue polypeptide: Putative cytochrome P450 CYP13A4 (520 aa).

Cys-464 is a heme binding site.

Belongs to the cytochrome P450 family. Heme is required as a cofactor.

Its function is as follows. Cytochromes P450 are a group of heme-thiolate monooxygenases. They oxidize a variety of structurally unrelated compounds, including steroids, fatty acids, and xenobiotics. The polypeptide is Putative cytochrome P450 CYP13A4 (cyp-13A4) (Caenorhabditis elegans).